The sequence spans 110 residues: UPF0060 membrane protein Bcep1808_1236 (110 aa).

The next 3 helical transmembrane spans lie at 9–29 (ALFA…WLVL), 34–54 (PVWL…LLTL), and 66–86 (YGGV…GVAL).

Belongs to the UPF0060 family.

The protein resides in the cell inner membrane. The protein is UPF0060 membrane protein Bcep1808_1236 of Burkholderia vietnamiensis (strain G4 / LMG 22486) (Burkholderia cepacia (strain R1808)).